Consider the following 661-residue polypeptide: B3 domain-containing protein Os12g0591400 (661 aa).

4 consecutive DNA-binding regions (TF-B3) follow at residues 2–95, 197–290, 437–535, and 562–658; these read GDQK…FNPS, KTRC…FNPS, LYIT…FKES, and TNLT…IRKG.

It localises to the nucleus. The sequence is that of B3 domain-containing protein Os12g0591400 from Oryza sativa subsp. japonica (Rice).